The sequence spans 355 residues: UDP-glucose 4-epimerase uge1 (355 aa).

8 to 39 (TVLVTGGAGYIGSHTCVVLLEKGYDVVIVDNL) contacts NAD(+).

The protein belongs to the NAD(P)-dependent epimerase/dehydratase family. Requires NAD(+) as cofactor.

The enzyme catalyses UDP-alpha-D-glucose = UDP-alpha-D-galactose. It participates in carbohydrate metabolism; galactose metabolism. Major UDP-glucose/-galactose 4-epimerase under glucose-rich conditions involved in protein galactosylation. This is UDP-glucose 4-epimerase uge1 (uge1) from Schizosaccharomyces pombe (strain 972 / ATCC 24843) (Fission yeast).